We begin with the raw amino-acid sequence, 162 residues long: NADH-quinone oxidoreductase subunit I 2 (162 aa).

2 consecutive 4Fe-4S ferredoxin-type domains span residues 53-83 (LRRYPNGEERCIACKLCEAVCPALAITIESE) and 93-122 (TRYDIDLTKCIFCGFCEESCPVDSIVETRI). Cysteine 63, cysteine 66, cysteine 69, cysteine 73, cysteine 102, cysteine 105, cysteine 108, and cysteine 112 together coordinate [4Fe-4S] cluster.

It belongs to the complex I 23 kDa subunit family. In terms of assembly, NDH-1 is composed of 14 different subunits. Subunits NuoA, H, J, K, L, M, N constitute the membrane sector of the complex. [4Fe-4S] cluster serves as cofactor.

Its subcellular location is the cell inner membrane. It carries out the reaction a quinone + NADH + 5 H(+)(in) = a quinol + NAD(+) + 4 H(+)(out). Its function is as follows. NDH-1 shuttles electrons from NADH, via FMN and iron-sulfur (Fe-S) centers, to quinones in the respiratory chain. The immediate electron acceptor for the enzyme in this species is believed to be ubiquinone. Couples the redox reaction to proton translocation (for every two electrons transferred, four hydrogen ions are translocated across the cytoplasmic membrane), and thus conserves the redox energy in a proton gradient. The sequence is that of NADH-quinone oxidoreductase subunit I 2 from Nitrosospira multiformis (strain ATCC 25196 / NCIMB 11849 / C 71).